The following is a 205-amino-acid chain: Small ribosomal subunit protein uS4 (205 aa).

The region spanning 94–157 (SRLDTVVYRM…QQIPLIQESI (64 aa)) is the S4 RNA-binding domain.

Belongs to the universal ribosomal protein uS4 family. Part of the 30S ribosomal subunit. Contacts protein S5. The interaction surface between S4 and S5 is involved in control of translational fidelity.

In terms of biological role, one of the primary rRNA binding proteins, it binds directly to 16S rRNA where it nucleates assembly of the body of the 30S subunit. Functionally, with S5 and S12 plays an important role in translational accuracy. The protein is Small ribosomal subunit protein uS4 of Rickettsia typhi (strain ATCC VR-144 / Wilmington).